A 391-amino-acid chain; its full sequence is Cyclin-B1-2 (391 aa).

Belongs to the cyclin family. Cyclin AB subfamily.

This chain is Cyclin-B1-2 (CYCB1-2), found in Oryza sativa subsp. japonica (Rice).